The primary structure comprises 156 residues: Small ribosomal subunit protein uS7 (156 aa).

It belongs to the universal ribosomal protein uS7 family. Part of the 30S ribosomal subunit. Contacts proteins S9 and S11.

One of the primary rRNA binding proteins, it binds directly to 16S rRNA where it nucleates assembly of the head domain of the 30S subunit. Is located at the subunit interface close to the decoding center, probably blocks exit of the E-site tRNA. The sequence is that of Small ribosomal subunit protein uS7 from Polynucleobacter asymbioticus (strain DSM 18221 / CIP 109841 / QLW-P1DMWA-1) (Polynucleobacter necessarius subsp. asymbioticus).